The sequence spans 859 residues: Collagen alpha-1(II) chain (859 aa).

Residues 1–607 (LQGLPGKDGE…LGQTEKGPDP (607 aa)) form a disordered region. A 4-hydroxyproline mark is found at proline 31 and proline 40. Proline 42 carries the 3-hydroxyproline modification. Proline 43 and proline 46 each carry 4-hydroxyproline. Over residues 78–121 (ERGSPGAQGLQGPRGLPGTPGTDGPKGATGPAGPNGAQGPPGLQ) the composition is skewed to low complexity. A compositionally biased stretch (basic and acidic residues) spans 136–147 (KGDRGDVGEKGP). 2 stretches are compositionally biased toward low complexity: residues 204 to 220 (PAGF…PGAK) and 249 to 277 (PTGV…AGRV). Residue proline 279 is modified to 3-hydroxyproline. Residues 279–292 (PPGPNGNPGPPGPP) show a composition bias toward pro residues. Residues proline 280, proline 286, and proline 292 each carry the 4-hydroxyproline modification. A compositionally biased stretch (low complexity) spans 306–321 (DAGPPGRAGDPGLQGP). Positions 487–501 (RGDKGETGEAGERGL) are enriched in basic and acidic residues. Residues 491–586 (GETGEAGERG…PGPPGPPGPP (96 aa)) are triple-helical region. Residue proline 516 is modified to 3-hydroxyproline. The span at 520–529 (SGDQGAAGPA) shows a compositional bias: low complexity. Residue proline 553 is modified to 4-hydroxyproline. Proline 558 is subject to 3-hydroxyproline. At proline 559 the chain carries 4-hydroxyproline. Residues 570–586 (PAGPPGNPGPPGPPGPP) show a composition bias toward pro residues. At proline 573 the chain carries 3-hydroxyproline. Proline 574 and proline 577 each carry 4-hydroxyproline. Proline 579 is subject to 3-hydroxyproline. 2 positions are modified to 4-hydroxyproline: proline 580 and proline 583. Position 585 is a 3-hydroxyproline (proline 585). Residue proline 586 is modified to 4-hydroxyproline. The tract at residues 587–613 (GTGIDMSAFAGLGQTEKGPDPIRYMRA) is nonhelical region (C-terminal). Residues 614–859 (DEAAGGLRQH…GVDIGPVCFL (246 aa)) constitute a propeptide, C-terminal propeptide. The 235-residue stretch at 625–859 (VEVDATLKSL…GVDIGPVCFL (235 aa)) folds into the Fibrillar collagen NC1 domain. Intrachain disulfides connect cysteine 655/cysteine 687, cysteine 695/cysteine 857, and cysteine 765/cysteine 810. Residues aspartate 673, asparagine 675, glutamine 676, cysteine 678, and aspartate 681 each coordinate Ca(2+). N-linked (GlcNAc...) asparagine glycosylation is present at asparagine 760.

It belongs to the fibrillar collagen family. In terms of assembly, homotrimers of alpha 1(II) chains. Contains mostly 4-hydroxyproline. Prolines at the third position of the tripeptide repeating unit (G-X-P) are 4-hydroxylated in some or all of the chains. Post-translationally, contains 3-hydroxyproline at a few sites. This modification occurs on the first proline residue in the sequence motif Gly-Pro-Hyp, where Hyp is 4-hydroxyproline. In terms of processing, lysine residues at the third position of the tripeptide repeating unit (G-X-Y) are 5-hydroxylated in some or all of the chains. O-glycosylated on hydroxylated lysine residues. The O-linked glycan consists of a Glc-Gal disaccharide.

It localises to the secreted. Its subcellular location is the extracellular space. The protein resides in the extracellular matrix. In terms of biological role, type II collagen is specific for cartilaginous tissues. It is essential for the normal embryonic development of the skeleton, for linear growth and for the ability of cartilage to resist compressive forces. The protein is Collagen alpha-1(II) chain of Gallus gallus (Chicken).